The following is a 397-amino-acid chain: CCA-adding enzyme (397 aa).

ATP-binding residues include glycine 26 and arginine 29. CTP-binding residues include glycine 26 and arginine 29. Positions 39 and 41 each coordinate Mg(2+). Positions 110, 153, 156, 159, and 162 each coordinate ATP. Residues arginine 110, aspartate 153, arginine 156, arginine 159, and arginine 162 each contribute to the CTP site.

This sequence belongs to the tRNA nucleotidyltransferase/poly(A) polymerase family. Bacterial CCA-adding enzyme type 3 subfamily. As to quaternary structure, homodimer. Mg(2+) serves as cofactor.

It carries out the reaction a tRNA precursor + 2 CTP + ATP = a tRNA with a 3' CCA end + 3 diphosphate. The enzyme catalyses a tRNA with a 3' CCA end + 2 CTP + ATP = a tRNA with a 3' CCACCA end + 3 diphosphate. Functionally, catalyzes the addition and repair of the essential 3'-terminal CCA sequence in tRNAs without using a nucleic acid template. Adds these three nucleotides in the order of C, C, and A to the tRNA nucleotide-73, using CTP and ATP as substrates and producing inorganic pyrophosphate. tRNA 3'-terminal CCA addition is required both for tRNA processing and repair. Also involved in tRNA surveillance by mediating tandem CCA addition to generate a CCACCA at the 3' terminus of unstable tRNAs. While stable tRNAs receive only 3'-terminal CCA, unstable tRNAs are marked with CCACCA and rapidly degraded. The protein is CCA-adding enzyme of Bacillus cereus (strain AH187).